The primary structure comprises 324 residues: Biotin synthase (324 aa).

One can recognise a Radical SAM core domain in the interval 43 to 273; it reads FCGNYFNFCS…HVFLRLAGGR (231 aa). 3 residues coordinate [4Fe-4S] cluster: Cys-61, Cys-65, and Cys-68. The [2Fe-2S] cluster site is built by Ser-105, Cys-138, Cys-198, and Arg-268.

This sequence belongs to the radical SAM superfamily. Biotin synthase family. Homodimer. [4Fe-4S] cluster is required as a cofactor. The cofactor is [2Fe-2S] cluster.

The catalysed reaction is (4R,5S)-dethiobiotin + (sulfur carrier)-SH + 2 reduced [2Fe-2S]-[ferredoxin] + 2 S-adenosyl-L-methionine = (sulfur carrier)-H + biotin + 2 5'-deoxyadenosine + 2 L-methionine + 2 oxidized [2Fe-2S]-[ferredoxin]. It participates in cofactor biosynthesis; biotin biosynthesis; biotin from 7,8-diaminononanoate: step 2/2. Functionally, catalyzes the conversion of dethiobiotin (DTB) to biotin by the insertion of a sulfur atom into dethiobiotin via a radical-based mechanism. The sequence is that of Biotin synthase from Campylobacter hominis (strain ATCC BAA-381 / DSM 21671 / CCUG 45161 / LMG 19568 / NCTC 13146 / CH001A).